The chain runs to 454 residues: Arginine biosynthesis bifunctional protein ArgJ, mitochondrial (454 aa).

Substrate is bound by residues Thr184, Lys213, Thr224, Glu311, Asn449, and Thr454. The active-site Nucleophile is Thr224.

It belongs to the ArgJ family. Heterodimer of an alpha and a beta chain. In terms of processing, the alpha and beta chains are autoproteolytically processed from a single precursor protein within the mitochondrion.

The protein localises to the mitochondrion matrix. It carries out the reaction N(2)-acetyl-L-ornithine + L-glutamate = N-acetyl-L-glutamate + L-ornithine. The catalysed reaction is L-glutamate + acetyl-CoA = N-acetyl-L-glutamate + CoA + H(+). The protein operates within amino-acid biosynthesis; L-arginine biosynthesis; L-ornithine and N-acetyl-L-glutamate from L-glutamate and N(2)-acetyl-L-ornithine (cyclic): step 1/1. It participates in amino-acid biosynthesis; L-arginine biosynthesis; N(2)-acetyl-L-ornithine from L-glutamate: step 1/4. Catalyzes two activities which are involved in the cyclic version of arginine biosynthesis: the synthesis of acetylglutamate from glutamate and acetyl-CoA, and of ornithine by transacetylation between acetylornithine and glutamate. The sequence is that of Arginine biosynthesis bifunctional protein ArgJ, mitochondrial from Aspergillus clavatus (strain ATCC 1007 / CBS 513.65 / DSM 816 / NCTC 3887 / NRRL 1 / QM 1276 / 107).